The sequence spans 355 residues: 3-dehydroquinate synthase (355 aa).

NAD(+) is bound by residues 71–76, 105–109, 129–130, Lys142, and Lys151; these read EGEASK, GVVGD, and TS. Residues Glu184, His246, and His263 each contribute to the Zn(2+) site.

The protein belongs to the sugar phosphate cyclases superfamily. Dehydroquinate synthase family. The cofactor is Co(2+). Zn(2+) is required as a cofactor. Requires NAD(+) as cofactor.

The protein localises to the cytoplasm. It carries out the reaction 7-phospho-2-dehydro-3-deoxy-D-arabino-heptonate = 3-dehydroquinate + phosphate. Its pathway is metabolic intermediate biosynthesis; chorismate biosynthesis; chorismate from D-erythrose 4-phosphate and phosphoenolpyruvate: step 2/7. Its function is as follows. Catalyzes the conversion of 3-deoxy-D-arabino-heptulosonate 7-phosphate (DAHP) to dehydroquinate (DHQ). The chain is 3-dehydroquinate synthase from Streptococcus gordonii (strain Challis / ATCC 35105 / BCRC 15272 / CH1 / DL1 / V288).